A 233-amino-acid polypeptide reads, in one-letter code: Large ribosomal subunit protein uL1 (233 aa).

It belongs to the universal ribosomal protein uL1 family. Part of the 50S ribosomal subunit.

Functionally, binds directly to 23S rRNA. The L1 stalk is quite mobile in the ribosome, and is involved in E site tRNA release. Its function is as follows. Protein L1 is also a translational repressor protein, it controls the translation of the L11 operon by binding to its mRNA. The chain is Large ribosomal subunit protein uL1 from Deinococcus deserti (strain DSM 17065 / CIP 109153 / LMG 22923 / VCD115).